The primary structure comprises 164 residues: 6,7-dimethyl-8-ribityllumazine synthase 1 (164 aa).

Residues phenylalanine 27, 58–60, and 87–89 each bind 5-amino-6-(D-ribitylamino)uracil; these read SLE and TII. 92–93 provides a ligand contact to (2S)-2-hydroxy-3-oxobutyl phosphate; sequence DT. The active-site Proton donor is histidine 95. Asparagine 120 provides a ligand contact to 5-amino-6-(D-ribitylamino)uracil. Residue arginine 134 participates in (2S)-2-hydroxy-3-oxobutyl phosphate binding.

This sequence belongs to the DMRL synthase family. As to quaternary structure, homopentamer.

The catalysed reaction is (2S)-2-hydroxy-3-oxobutyl phosphate + 5-amino-6-(D-ribitylamino)uracil = 6,7-dimethyl-8-(1-D-ribityl)lumazine + phosphate + 2 H2O + H(+). It participates in cofactor biosynthesis; riboflavin biosynthesis; riboflavin from 2-hydroxy-3-oxobutyl phosphate and 5-amino-6-(D-ribitylamino)uracil: step 1/2. Its function is as follows. Catalyzes the formation of 6,7-dimethyl-8-ribityllumazine by condensation of 5-amino-6-(D-ribitylamino)uracil with 3,4-dihydroxy-2-butanone 4-phosphate. This is the penultimate step in the biosynthesis of riboflavin. The chain is 6,7-dimethyl-8-ribityllumazine synthase 1 (ribH1) from Mesorhizobium japonicum (strain LMG 29417 / CECT 9101 / MAFF 303099) (Mesorhizobium loti (strain MAFF 303099)).